The following is an 81-amino-acid chain: Photosystem I iron-sulfur center (81 aa).

4Fe-4S ferredoxin-type domains follow at residues Ser2–Trp31 and Ile39–Tyr68. [4Fe-4S] cluster contacts are provided by Cys11, Cys14, Cys17, Cys21, Cys48, Cys51, Cys54, and Cys58.

The cyanobacterial PSI reaction center is composed of one copy each of PsaA,B,C,D,E,F,I,J,K,L,M and X, and forms trimeric complexes. [4Fe-4S] cluster is required as a cofactor.

The protein localises to the cellular thylakoid membrane. The enzyme catalyses reduced [plastocyanin] + hnu + oxidized [2Fe-2S]-[ferredoxin] = oxidized [plastocyanin] + reduced [2Fe-2S]-[ferredoxin]. Apoprotein for the two 4Fe-4S centers FA and FB of photosystem I (PSI); essential for photochemical activity. FB is the terminal electron acceptor of PSI, donating electrons to ferredoxin. The C-terminus interacts with PsaA/B/D and helps assemble the protein into the PSI complex. Required for binding of PsaD and PsaE to PSI. PSI is a plastocyanin/cytochrome c6-ferredoxin oxidoreductase, converting photonic excitation into a charge separation, which transfers an electron from the donor P700 chlorophyll pair to the spectroscopically characterized acceptors A0, A1, FX, FA and FB in turn. The protein is Photosystem I iron-sulfur center of Mastigocladus laminosus (Fischerella sp.).